Reading from the N-terminus, the 226-residue chain is Cysteine and histidine-rich domain-containing protein RAR1 (226 aa).

Cys12, Cys17, Cys31, His34, Cys49, Cys50, Cys66, and His71 together coordinate Zn(2+). The 60-residue stretch at 12 to 71 folds into the CHORD 1 domain; sequence CQRIGCNAMFTDDDNPQGSCQFHASGPFFHDGMKEWSCCKQRSHDFSLFLEIPGCKTGKH. The short motif at 104 to 124 is the CCCH element; sequence CSRCRQGFFCSDHGSQPKEQI. Cys159, Cys164, Cys178, His181, Cys196, Cys197, Cys213, and His218 together coordinate Zn(2+). Positions 159-218 constitute a CHORD 2 domain; sequence CKNKGCGQTFKERDNHETACSHHPGPAVFHDRLRGWKCCDVHVKEFDEFMEIPPCTKGWH.

In terms of assembly, interacts with HSP90-1, HSP90-2, SGT1A and SGT1B. Forms a ternary complex with SGT1A and barley HSP90.

Its function is as follows. Required specifically for plant innate immunity. Is essential for resistance conferred by multiple R genes recognizing different bacterial and oomycete pathogen isolates like avirulent P.syringae or H.parasitica (downy mildew). Contributes additively with SGT1B to RPP5-dependent resistance. Functions as a positive regulator of RPS5 accumulation by assisting its stabilization. May function as co-chaperone of HSP90-2 to positively regulate the steady-state accumulation of RPM1 and protect it from SGT1-mediated degradation. Acts as a negative regulator of pathogen-associated molecular pattern (PAMP)-triggered immunity. The polypeptide is Cysteine and histidine-rich domain-containing protein RAR1 (RAR1) (Arabidopsis thaliana (Mouse-ear cress)).